Here is a 346-residue protein sequence, read N- to C-terminus: Dihydroorotase (346 aa).

Residues histidine 14 and histidine 16 each coordinate Zn(2+). Substrate-binding positions include 16–18 (HLR) and asparagine 42. Lysine 100, histidine 137, and histidine 175 together coordinate Zn(2+). N6-carboxylysine is present on lysine 100. Position 137 (histidine 137) interacts with substrate. A substrate-binding site is contributed by leucine 220. Aspartate 248 is a Zn(2+) binding site. Aspartate 248 is a catalytic residue. The substrate site is built by histidine 252 and alanine 264.

It belongs to the metallo-dependent hydrolases superfamily. DHOase family. Class II DHOase subfamily. Homodimer. Requires Zn(2+) as cofactor.

The catalysed reaction is (S)-dihydroorotate + H2O = N-carbamoyl-L-aspartate + H(+). The protein operates within pyrimidine metabolism; UMP biosynthesis via de novo pathway; (S)-dihydroorotate from bicarbonate: step 3/3. Functionally, catalyzes the reversible cyclization of carbamoyl aspartate to dihydroorotate. This Ruegeria pomeroyi (strain ATCC 700808 / DSM 15171 / DSS-3) (Silicibacter pomeroyi) protein is Dihydroorotase.